The chain runs to 37 residues: Large ribosomal subunit protein bL36c (37 aa).

Belongs to the bacterial ribosomal protein bL36 family.

The protein resides in the plastid. The protein localises to the chloroplast. The polypeptide is Large ribosomal subunit protein bL36c (rpl36) (Nephroselmis olivacea (Green alga)).